The primary structure comprises 131 residues: Large ribosomal subunit protein bL17 (131 aa).

Belongs to the bacterial ribosomal protein bL17 family. In terms of assembly, part of the 50S ribosomal subunit. Contacts protein L32.

This chain is Large ribosomal subunit protein bL17, found in Polynucleobacter necessarius subsp. necessarius (strain STIR1).